A 696-amino-acid polypeptide reads, in one-letter code: uncharacterized protein (696 aa).

The region spanning 293 to 426 (SVLGLVLLGF…GSRQYCFYEE (134 aa)) is the GGDEF domain. One can recognise an EAL domain in the interval 435–689 (RIQLEHALHQ…EITAFLAEGN (255 aa)).

This is an uncharacterized protein from Synechocystis sp. (strain ATCC 27184 / PCC 6803 / Kazusa).